Reading from the N-terminus, the 929-residue chain is Facilitated trehalose transporter Tret1 (929 aa).

The disordered stretch occupies residues 1-275; sequence MSGRDNRAAG…VGYQQQKATS (275 aa). Over 1–462 the chain is Cytoplasmic; it reads MSGRDNRAAG…LEVYRPTTNP (462 aa). Over residues 10-26 the composition is skewed to gly residues; it reads GAGGGSGGGGGGGGGGG. Basic and acidic residues predominate over residues 41–59; it reads KLKEKLTRAGEELGYHRVE. The span at 60 to 72 shows a compositional bias: polar residues; sequence SNLSASNTATSLD. Composition is skewed to low complexity over residues 85–141, 168–178, and 237–254; these read AAPQ…QPLR, QEIQQQQLQQQ, and SNSN…VAAD. A phosphoserine mark is found at S320, S321, and S322. The segment at 352 to 371 is disordered; that stretch reads VLHGSSTDSDEEGEDAEHKR. Phosphoserine is present on residues S392 and S394. A disordered region spans residues 398 to 420; it reads FLSSRQNFQQQRSISTDSRKSRR. Polar residues predominate over residues 402-413; that stretch reads RQNFQQQRSIST. A helical transmembrane segment spans residues 463–483; sequence IYIWTQVLAALSVSLGSLVVG. Residues 484–512 are Extracellular-facing; that stretch reads FSSAYTSPALVSMTDRNLTSFDVSTEDAS. A glycan (N-linked (GlcNAc...) asparagine) is linked at N500. Residues 513–533 traverse the membrane as a helical segment; the sequence is WVGGIMPLAGLAGGIAGGPLI. The Cytoplasmic portion of the chain corresponds to 534–541; that stretch reads EYLGRRNT. A helical transmembrane segment spans residues 542 to 562; it reads ILATAVPFIISWLLIACAVNV. Over 563 to 569 the chain is Extracellular; the sequence is PMVLSGR. Residues 570-590 traverse the membrane as a helical segment; it reads FLAGFCVGIASLSLPVYLGET. The Cytoplasmic segment spans residues 591–596; sequence VQPEVR. Residues 597-617 form a helical membrane-spanning segment; sequence GTLGLLPTAFGNIGILLCFIA. At 618–624 the chain is on the extracellular side; that stretch reads GTYMDWS. A helical membrane pass occupies residues 625-645; sequence MLAFLGGALPVPFLILMFLIP. Over 646–708 the chain is Cytoplasmic; it reads ETPRWYVSRG…ELLKRSNLKP (63 aa). A helical transmembrane segment spans residues 709–729; the sequence is LSISLGLMFFQQLSGINAVIF. Over 730-745 the chain is Extracellular; the sequence is YTVQIFKDAGSTLDGN. Residues 746–766 traverse the membrane as a helical segment; sequence VCTIIVGTVNFIATFIGILLI. At 767–772 the chain is on the cytoplasmic side; sequence DRAGRK. A helical transmembrane segment spans residues 773–793; sequence ILLYVSNIAMILTLFVLGGFF. The Extracellular segment spans residues 794–804; it reads YCKANGMDVSN. A helical membrane pass occupies residues 805–825; sequence VGLLPLCCFVVYILGFSLGFG. The Cytoplasmic portion of the chain corresponds to 826-839; that stretch reads PIPWLMMGEILPAK. A helical transmembrane segment spans residues 840-860; sequence IRGSAASVATAFNWTCTFVVT. Residues 861–873 are Extracellular-facing; it reads KSFLDMIKLIGAH. Residues 874–894 traverse the membrane as a helical segment; sequence GAFWLFGVICCIGMFFVIFCV. Residues 895–929 lie on the Cytoplasmic side of the membrane; sequence PETQGKTLEDIERKMMGRVRRMSSVANIKPLSFNM. Phosphoserine is present on residues S917 and S918.

It belongs to the major facilitator superfamily. Sugar transporter (TC 2.A.1.1) family. Trehalose transporter subfamily.

The protein resides in the cell membrane. Functionally, low-capacity facilitative transporter for trehalose. Does not transport maltose, sucrose or lactose. Mediates the bidirectional transfer of trehalose. Responsible for the transport of trehalose synthesized in the fat body and the incorporation of trehalose into other tissues that require a carbon source, thereby regulating trehalose levels in the hemolymph. The sequence is that of Facilitated trehalose transporter Tret1 from Drosophila grimshawi (Hawaiian fruit fly).